Reading from the N-terminus, the 148-residue chain is Transcriptional regulator MraZ (148 aa).

2 SpoVT-AbrB domains span residues 5 to 53 and 82 to 125; these read ETAI…AEKE and SAVL…SEQA.

This sequence belongs to the MraZ family. As to quaternary structure, forms oligomers.

It is found in the cytoplasm. Its subcellular location is the nucleoid. The polypeptide is Transcriptional regulator MraZ (Xanthomonas axonopodis pv. citri (strain 306)).